The following is a 352-amino-acid chain: MPAQRMRSVIPPYMLRALLTRYAPQRDCALHTLNHVQSLLGNKPLRSPTEKNARAGERSAISTTPERHPTARQTGAQGGAAQQPRRAVDEAYDHLGVTYDFFWQAYRRNSVDNKGLPLVQRALRQGLPEQLSGTASRWCSETATARSSTVSPSPSTLVGHELTHGSDRERSRLIYYQQSGALNESLSDVFGSLVKQFHLQQTADKADWLIGAGLLAKGIKGKGLRSMSAPGTAYDDPLLGKDPQPASMKDYIQTKEDNGGVHLNSGIPNRAFYLAATVLGGFAGKKPVTSGMTRCATKRCRKTPTSDHLRPRHGETRAGLRTKRGDKVQQAWASGWQWSNETAADAQSGYGH.

Disordered regions lie at residues glycine 41–arginine 86 and threonine 144–histidine 164. A compositionally biased stretch (basic and acidic residues) spans proline 48–glutamate 57. 2 stretches are compositionally biased toward low complexity: residues alanine 71–arginine 85 and threonine 144–threonine 156. Histidine 160 serves as a coordination point for Zn(2+). Residue glutamate 161 is part of the active site. Histidine 164 and glutamate 184 together coordinate Zn(2+). Histidine 262 (proton donor) is an active-site residue. Residues threonine 303–glycine 325 are disordered. A compositionally biased stretch (basic and acidic residues) spans proline 304–glycine 325.

The protein belongs to the peptidase M4 family. The cofactor is Zn(2+).

The protein resides in the secreted. In Serratia marcescens (strain ATCC 21074 / E-15), this protein is Extracellular minor metalloprotease (smp).